The chain runs to 316 residues: Acetaldehyde dehydrogenase (316 aa).

11–14 (SGNI) provides a ligand contact to NAD(+). Cys-131 acts as the Acyl-thioester intermediate in catalysis. Residues 162–170 (SAGPGTRAN) and Asn-289 contribute to the NAD(+) site.

Belongs to the acetaldehyde dehydrogenase family. As to quaternary structure, interacts with MhpE.

It catalyses the reaction acetaldehyde + NAD(+) + CoA = acetyl-CoA + NADH + H(+). The protein operates within aromatic compound metabolism; 3-phenylpropanoate degradation. Functionally, catalyzes the conversion of acetaldehyde to acetyl-CoA, using NAD(+) and coenzyme A. Is the final enzyme in the meta-cleavage pathway for the degradation of aromatic compounds. The polypeptide is Acetaldehyde dehydrogenase (Escherichia coli O7:K1 (strain IAI39 / ExPEC)).